We begin with the raw amino-acid sequence, 320 residues long: Aspartate carbamoyltransferase catalytic subunit (320 aa).

Residues Arg70 and Thr71 each contribute to the carbamoyl phosphate site. Position 98 (Lys98) interacts with L-aspartate. Arg120, His149, and Gln152 together coordinate carbamoyl phosphate. The L-aspartate site is built by Arg182 and Arg237. Carbamoyl phosphate contacts are provided by Gly278 and Pro279.

Belongs to the aspartate/ornithine carbamoyltransferase superfamily. ATCase family. In terms of assembly, heterododecamer (2C3:3R2) of six catalytic PyrB chains organized as two trimers (C3), and six regulatory PyrI chains organized as three dimers (R2).

The enzyme catalyses carbamoyl phosphate + L-aspartate = N-carbamoyl-L-aspartate + phosphate + H(+). It participates in pyrimidine metabolism; UMP biosynthesis via de novo pathway; (S)-dihydroorotate from bicarbonate: step 2/3. Catalyzes the condensation of carbamoyl phosphate and aspartate to form carbamoyl aspartate and inorganic phosphate, the committed step in the de novo pyrimidine nucleotide biosynthesis pathway. In Vesicomyosocius okutanii subsp. Calyptogena okutanii (strain HA), this protein is Aspartate carbamoyltransferase catalytic subunit.